The chain runs to 304 residues: Aspartate carbamoyltransferase catalytic subunit (304 aa).

2 residues coordinate carbamoyl phosphate: Arg-49 and Thr-50. Position 77 (Lys-77) interacts with L-aspartate. Residues Arg-99, His-127, and Gln-130 each coordinate carbamoyl phosphate. Positions 160 and 211 each coordinate L-aspartate. Carbamoyl phosphate is bound by residues Ala-250 and Pro-251.

Belongs to the aspartate/ornithine carbamoyltransferase superfamily. ATCase family. As to quaternary structure, heterododecamer (2C3:3R2) of six catalytic PyrB chains organized as two trimers (C3), and six regulatory PyrI chains organized as three dimers (R2).

It carries out the reaction carbamoyl phosphate + L-aspartate = N-carbamoyl-L-aspartate + phosphate + H(+). Its pathway is pyrimidine metabolism; UMP biosynthesis via de novo pathway; (S)-dihydroorotate from bicarbonate: step 2/3. Catalyzes the condensation of carbamoyl phosphate and aspartate to form carbamoyl aspartate and inorganic phosphate, the committed step in the de novo pyrimidine nucleotide biosynthesis pathway. The protein is Aspartate carbamoyltransferase catalytic subunit of Bacillus velezensis (strain DSM 23117 / BGSC 10A6 / LMG 26770 / FZB42) (Bacillus amyloliquefaciens subsp. plantarum).